Reading from the N-terminus, the 196-residue chain is Endonuclease V (196 aa).

2 residues coordinate Mg(2+): D37 and D98.

It belongs to the endonuclease V family. Mg(2+) serves as cofactor.

The protein resides in the cytoplasm. It catalyses the reaction Endonucleolytic cleavage at apurinic or apyrimidinic sites to products with a 5'-phosphate.. Its function is as follows. DNA repair enzyme involved in the repair of deaminated bases. Selectively cleaves double-stranded DNA at the second phosphodiester bond 3' to a deoxyinosine leaving behind the intact lesion on the nicked DNA. In Sulfurisphaera tokodaii (strain DSM 16993 / JCM 10545 / NBRC 100140 / 7) (Sulfolobus tokodaii), this protein is Endonuclease V.